A 533-amino-acid chain; its full sequence is Amidophosphoribosyltransferase (533 aa).

Cysteine 2 acts as the Nucleophile in catalysis. The region spanning 2–238 (CGILALMLAD…PGECVFIRRS (237 aa)) is the Glutamine amidotransferase type-2 domain. Mg(2+) is bound by residues aspartate 383 and aspartate 384. Serine 506 carries the phosphoserine modification.

This sequence in the C-terminal section; belongs to the purine/pyrimidine phosphoribosyltransferase family. The cofactor is Mg(2+).

It catalyses the reaction 5-phospho-beta-D-ribosylamine + L-glutamate + diphosphate = 5-phospho-alpha-D-ribose 1-diphosphate + L-glutamine + H2O. Its pathway is purine metabolism; IMP biosynthesis via de novo pathway; N(1)-(5-phospho-D-ribosyl)glycinamide from 5-phospho-alpha-D-ribose 1-diphosphate: step 1/2. The protein is Amidophosphoribosyltransferase (ade4) of Schizosaccharomyces pombe (strain 972 / ATCC 24843) (Fission yeast).